The primary structure comprises 90 residues: Small ribosomal subunit protein uS15 (90 aa).

This sequence belongs to the universal ribosomal protein uS15 family. As to quaternary structure, part of the 30S ribosomal subunit. Forms a bridge to the 50S subunit in the 70S ribosome, contacting the 23S rRNA.

Functionally, one of the primary rRNA binding proteins, it binds directly to 16S rRNA where it helps nucleate assembly of the platform of the 30S subunit by binding and bridging several RNA helices of the 16S rRNA. Forms an intersubunit bridge (bridge B4) with the 23S rRNA of the 50S subunit in the ribosome. This is Small ribosomal subunit protein uS15 from Helicobacter acinonychis (strain Sheeba).